Here is a 237-residue protein sequence, read N- to C-terminus: Endoglucanase-1 (237 aa).

Residues 1-16 (MKAFHLLAALAGAAVA) form the signal peptide. Q17 carries the pyrrolidone carboxylic acid modification.

This sequence belongs to the glycosyl hydrolase 12 (cellulase H) family.

The protein resides in the secreted. The catalysed reaction is Endohydrolysis of (1-&gt;4)-beta-D-glucosidic linkages in cellulose, lichenin and cereal beta-D-glucans.. In Aspergillus aculeatus, this protein is Endoglucanase-1.